The sequence spans 856 residues: DNA mismatch repair protein MutS (856 aa).

Residue 618-625 participates in ATP binding; the sequence is GPNMGGKS.

This sequence belongs to the DNA mismatch repair MutS family.

This protein is involved in the repair of mismatches in DNA. It is possible that it carries out the mismatch recognition step. This protein has a weak ATPase activity. This is DNA mismatch repair protein MutS from Shewanella baltica (strain OS195).